The following is a 356-amino-acid chain: Probable dual-specificity RNA methyltransferase RlmN (356 aa).

Glu-92 acts as the Proton acceptor in catalysis. The Radical SAM core domain occupies 98 to 336 (HKYGFSVCVT…CGVRLEHGTD (239 aa)). Cys-105 and Cys-341 are disulfide-bonded. [4Fe-4S] cluster-binding residues include Cys-112, Cys-116, and Cys-119. S-adenosyl-L-methionine-binding positions include 164 to 165 (GE), Ser-196, 219 to 221 (SLH), and Asn-297. The active-site S-methylcysteine intermediate is the Cys-341.

It belongs to the radical SAM superfamily. RlmN family. It depends on [4Fe-4S] cluster as a cofactor.

It is found in the cytoplasm. It carries out the reaction adenosine(2503) in 23S rRNA + 2 reduced [2Fe-2S]-[ferredoxin] + 2 S-adenosyl-L-methionine = 2-methyladenosine(2503) in 23S rRNA + 5'-deoxyadenosine + L-methionine + 2 oxidized [2Fe-2S]-[ferredoxin] + S-adenosyl-L-homocysteine. It catalyses the reaction adenosine(37) in tRNA + 2 reduced [2Fe-2S]-[ferredoxin] + 2 S-adenosyl-L-methionine = 2-methyladenosine(37) in tRNA + 5'-deoxyadenosine + L-methionine + 2 oxidized [2Fe-2S]-[ferredoxin] + S-adenosyl-L-homocysteine. Its function is as follows. Specifically methylates position 2 of adenine 2503 in 23S rRNA and position 2 of adenine 37 in tRNAs. In Shouchella clausii (strain KSM-K16) (Alkalihalobacillus clausii), this protein is Probable dual-specificity RNA methyltransferase RlmN.